The primary structure comprises 318 residues: Pyrimidine-specific ribonucleoside hydrolase RihA (318 aa).

Residue H240 is part of the active site.

It belongs to the IUNH family. RihA subfamily.

Its function is as follows. Hydrolyzes cytidine or uridine to ribose and cytosine or uracil, respectively. This chain is Pyrimidine-specific ribonucleoside hydrolase RihA, found in Shewanella baltica (strain OS185).